A 662-amino-acid chain; its full sequence is Methionine--tRNA ligase (662 aa).

Positions 13 to 23 (PYTNGPCHLGH) match the 'HIGH' region motif. Zn(2+)-binding residues include cysteine 144, cysteine 147, cysteine 156, and cysteine 160. A 'KMSKS' region motif is present at residues 326–330 (KFSKS). Lysine 329 contacts ATP. The tRNA-binding domain occupies 564–662 (DFSKVEIKTG…KPVEPGTKIR (99 aa)).

Belongs to the class-I aminoacyl-tRNA synthetase family. MetG type 1 subfamily. In terms of assembly, homodimer. Zn(2+) is required as a cofactor.

The protein localises to the cytoplasm. It catalyses the reaction tRNA(Met) + L-methionine + ATP = L-methionyl-tRNA(Met) + AMP + diphosphate. Is required not only for elongation of protein synthesis but also for the initiation of all mRNA translation through initiator tRNA(fMet) aminoacylation. In Methanoregula boonei (strain DSM 21154 / JCM 14090 / 6A8), this protein is Methionine--tRNA ligase.